We begin with the raw amino-acid sequence, 148 residues long: MCPPVRQRPAQAPPAKRQALETVPHPQNRGRLMSPKARPPKMQRRPRPPVAKRRRFPRSPQQVERPILPPVESTPQDMEPGQVQSPPQITAVIQLRQERDTMRPPIYLPALLANCGPAGLLRAHRLPQPKPPCQSRQRPSPDSQTSPC.

Residues 1-17 are compositionally biased toward low complexity; sequence MCPPVRQRPAQAPPAKR. Disordered stretches follow at residues 1–86 and 122–148; these read MCPP…VQSP and RAHR…TSPC. Over residues 38–57 the composition is skewed to basic residues; sequence RPPKMQRRPRPPVAKRRRFP. Over residues 134–148 the composition is skewed to polar residues; that stretch reads QSRQRPSPDSQTSPC.

It belongs to the Epstein-Barr virus BLLF2 family.

This is an uncharacterized protein from Homo sapiens (Human).